A 461-amino-acid polypeptide reads, in one-letter code: Phosphomethylpyrimidine synthase (461 aa).

Substrate is bound by residues asparagine 81, methionine 110, tyrosine 140, histidine 176, 196–198, 237–240, and glutamate 276; these read SRG and DSLR. Histidine 280 lines the Zn(2+) pocket. Tyrosine 303 is a binding site for substrate. A Zn(2+)-binding site is contributed by histidine 344. [4Fe-4S] cluster contacts are provided by cysteine 424, cysteine 427, and cysteine 432.

Belongs to the ThiC family. [4Fe-4S] cluster serves as cofactor.

It catalyses the reaction 5-amino-1-(5-phospho-beta-D-ribosyl)imidazole + S-adenosyl-L-methionine = 4-amino-2-methyl-5-(phosphooxymethyl)pyrimidine + CO + 5'-deoxyadenosine + formate + L-methionine + 3 H(+). It participates in cofactor biosynthesis; thiamine diphosphate biosynthesis. In terms of biological role, catalyzes the synthesis of the hydroxymethylpyrimidine phosphate (HMP-P) moiety of thiamine from aminoimidazole ribotide (AIR) in a radical S-adenosyl-L-methionine (SAM)-dependent reaction. This chain is Phosphomethylpyrimidine synthase, found in Thermosynechococcus vestitus (strain NIES-2133 / IAM M-273 / BP-1).